Consider the following 395-residue polypeptide: Acetate kinase (395 aa).

Asn-7 is a Mg(2+) binding site. Lys-14 contacts ATP. Arg-90 is a substrate binding site. The Proton donor/acceptor role is filled by Asp-147. Residues 207 to 211 (HLGNG), 282 to 284 (DFR), and 330 to 334 (GLGEN) each bind ATP. Glu-383 provides a ligand contact to Mg(2+).

This sequence belongs to the acetokinase family. In terms of assembly, homodimer. Mg(2+) serves as cofactor. Requires Mn(2+) as cofactor.

It is found in the cytoplasm. The enzyme catalyses acetate + ATP = acetyl phosphate + ADP. It functions in the pathway metabolic intermediate biosynthesis; acetyl-CoA biosynthesis; acetyl-CoA from acetate: step 1/2. Its function is as follows. Catalyzes the formation of acetyl phosphate from acetate and ATP. Can also catalyze the reverse reaction. The protein is Acetate kinase of Lachnoclostridium phytofermentans (strain ATCC 700394 / DSM 18823 / ISDg) (Clostridium phytofermentans).